The chain runs to 156 residues: Small ribosomal subunit protein uS7cz/uS7cy (156 aa).

The protein belongs to the universal ribosomal protein uS7 family. As to quaternary structure, part of the 30S ribosomal subunit.

It is found in the plastid. It localises to the chloroplast. Functionally, one of the primary rRNA binding proteins, it binds directly to 16S rRNA where it nucleates assembly of the head domain of the 30S subunit. The polypeptide is Small ribosomal subunit protein uS7cz/uS7cy (rps7-A) (Saccharum hybrid (Sugarcane)).